Reading from the N-terminus, the 641-residue chain is Tetracycline resistance protein TetS (641 aa).

Residues 1-242 (MKIINIGILA…VITSKLFSPT (242 aa)) enclose the tr-type G domain. GTP contacts are provided by residues 10-17 (AHVDAGKT), 74-78 (DTPGH), and 128-131 (NKID).

The protein belongs to the TRAFAC class translation factor GTPase superfamily. Classic translation factor GTPase family. TetM/TetO subfamily.

Its function is as follows. Abolishes the inhibitory effect of tetracyclin on protein synthesis by a non-covalent modification of the ribosomes. This Listeria monocytogenes protein is Tetracycline resistance protein TetS (tetS).